A 914-amino-acid polypeptide reads, in one-letter code: Solute carrier family 12 member 9 (914 aa).

The Cytoplasmic segment spans residues 1–36 (MASESSPLLAYRLLGEEGVALPANGAGGPGGASARK). Ser-6 bears the Phosphoserine mark. A helical transmembrane segment spans residues 37-57 (LSTFLGVVVPTVLSMFSIVVF). The Extracellular segment spans residues 58 to 72 (LRIGFVVGHAGLLQA). The chain crosses the membrane as a helical span at residues 73-93 (LAMLLVAYFILALTVLSVCAI). The Cytoplasmic portion of the chain corresponds to 94–119 (ATNGAVQGGGAYFMISRTLGPEVGGS). Residues 120–140 (IGLMFYLANVCGCAVSLLGLV) form a helical membrane-spanning segment. Residues 141 to 167 (ESVLDVFGADATGPSGLRVLPQGYGWN) lie on the Extracellular side of the membrane. A helical membrane pass occupies residues 168-188 (LLYGSLLLGLVGGVCTLGAGL). At 189-193 (YARAS) the chain is on the cytoplasmic side. The helical transmembrane segment at 194–214 (FLTFLLVSGSLASVLISFVAV) threads the bilayer. Residues 215–262 (GPRDIRLTPRPGPNGSSLPPRFGHFTGFNSSTLKDNLGAGYAEDYTTG) are Extracellular-facing. 2 N-linked (GlcNAc...) asparagine glycosylation sites follow: Asn-228 and Asn-243. The chain crosses the membrane as a helical span at residues 263–283 (AVMNFASVFAVLFNGCTGIMA). Residues 284–297 (GANMSGELKDPSRA) lie on the Cytoplasmic side of the membrane. The chain crosses the membrane as a helical span at residues 298–318 (IPLGTIVAVAYTFFVYVLLFF). Topologically, residues 319-338 (LSSFTCDRTLLQEDYGFFRA) are extracellular. A helical membrane pass occupies residues 339–359 (ISLWPPLVLIGIYATALSASM). Residues 360–390 (SSLIGASRILHALARDDLFGVILAPAKVVSR) are Cytoplasmic-facing. Residues 391-411 (GGNPWAAVLYSWGLVQLVLLA) form a helical membrane-spanning segment. The Extracellular portion of the chain corresponds to 412–416 (GKLNT). The chain crosses the membrane as a helical span at residues 417 to 437 (LAAVVTVFYLVAYAAVDLSCL). At 438–466 (SLEWASAPNFRPTFSLFSWHTCLLGVASC) the chain is on the cytoplasmic side. Residues 467–487 (LLMMFLISPGAAGGSLLLMGL) form a helical membrane-spanning segment. Residues 488-740 (LAALLTARGG…LLRPRGGPGY (253 aa)) are Extracellular-facing. Residues 642 to 678 (LTDPAFSEPADSTREGSSPALSTLFPPPRAPGSPRAL) form a disordered region. A helical membrane pass occupies residues 741 to 761 (VDVCGLFLLQMATILGMVPAW). The Cytoplasmic portion of the chain corresponds to 762–914 (HSARLRIFLC…GVTPVTCTDL (153 aa)). Residues 844 to 863 (QQGRGTGGGPGGPEGGDAEG) form a disordered region. The span at 847 to 858 (RGTGGGPGGPEG) shows a compositional bias: gly residues.

This sequence belongs to the SLC12A transporter family. As to quaternary structure, interacts with SLC12A1. In terms of tissue distribution, highly expressed in placenta, brain and kidney. Lower expression in lung, liver and heart.

The protein localises to the cell membrane. It is found in the lysosome membrane. Functionally, may be an inhibitor of SLC12A1. Seems to correspond to a subunit of a multimeric transport system and thus, additional subunits may be required for its function. May play a role in lysosomal ion flux and osmoregulation. The polypeptide is Solute carrier family 12 member 9 (SLC12A9) (Homo sapiens (Human)).